Consider the following 93-residue polypeptide: UPF0358 protein RBAM_014700 (93 aa).

It belongs to the UPF0358 family.

The sequence is that of UPF0358 protein RBAM_014700 from Bacillus velezensis (strain DSM 23117 / BGSC 10A6 / LMG 26770 / FZB42) (Bacillus amyloliquefaciens subsp. plantarum).